The sequence spans 190 residues: Coat protein (190 aa).

This sequence belongs to the potexvirus capsid protein family.

The protein localises to the virion. Required for genome encapsidation. Forms ribonucleoprotein complexes along with TGB1 helicase and viral RNA. The polypeptide is Coat protein (White clover mosaic virus (strain M) (WCMV)).